A 147-amino-acid polypeptide reads, in one-letter code: MVNLTAKERQLITGTWSKICAKTLGKQALGSMLYTYPWTQRYFSSFGNLSSIEAIFHNAAVATHGEKVLTSIGEAIKHMDDIKGYYAQLSKYHSETLHVDPYNFKRFCSCTIISMAQTLQEDFTPELQAAFEKLFAAIADALGKGYH.

The 145-residue stretch at 3–147 (NLTAKERQLI…IADALGKGYH (145 aa)) folds into the Globin domain. Heme b is bound by residues His-64 and His-93.

It belongs to the globin family. In terms of assembly, heterotetramer of two alpha chains and two beta chains. In terms of tissue distribution, red blood cells.

Its function is as follows. Involved in oxygen transport from the lung to the various peripheral tissues. The sequence is that of Hemoglobin subunit beta-1 (hbb1) from Xenopus tropicalis (Western clawed frog).